The chain runs to 273 residues: Dormancy associated translation inhibitor (273 aa).

As to quaternary structure, interacts with human TLR2.

In terms of biological role, involved in translation regulation. Can also stimulate macrophages and peripheral blood mononuclear cells (PBMC) to secrete important cytokines that may be significant in granuloma formation and its maintenance. Increases secretion of IFN-gamma, TNF-alpha, IL-1 beta and IL-8 through human Toll-like receptor 2 (TLR2) signaling pathway. The protein is Dormancy associated translation inhibitor of Mycobacterium tuberculosis (strain CDC 1551 / Oshkosh).